Here is a 263-residue protein sequence, read N- to C-terminus: Probable methylthioribulose-1-phosphate dehydratase (263 aa).

Cys102 provides a ligand contact to substrate. Zn(2+) is bound by residues His120 and His122. Glu144 functions as the Proton donor/acceptor in the catalytic mechanism. His200 serves as a coordination point for Zn(2+).

It belongs to the aldolase class II family. MtnB subfamily. It depends on Zn(2+) as a cofactor.

It localises to the cytoplasm. It catalyses the reaction 5-(methylsulfanyl)-D-ribulose 1-phosphate = 5-methylsulfanyl-2,3-dioxopentyl phosphate + H2O. Its pathway is amino-acid biosynthesis; L-methionine biosynthesis via salvage pathway; L-methionine from S-methyl-5-thio-alpha-D-ribose 1-phosphate: step 2/6. Its function is as follows. Catalyzes the dehydration of methylthioribulose-1-phosphate (MTRu-1-P) into 2,3-diketo-5-methylthiopentyl-1-phosphate (DK-MTP-1-P). The polypeptide is Probable methylthioribulose-1-phosphate dehydratase (Caenorhabditis elegans).